A 392-amino-acid polypeptide reads, in one-letter code: HORMA domain-containing protein 1 (392 aa).

In terms of domain architecture, HORMA spans Q25–V227. 2 disordered regions span residues I271–L292 and L371–T392. At S374 the chain carries Phosphoserine. Positions K381–R384 match the Nuclear localization signal motif.

As to quaternary structure, interacts with HORMAD2. Interacts with IHO1. In terms of processing, phosphorylated at Ser-375 in a SPO11-dependent manner.

The protein localises to the nucleus. It is found in the chromosome. Plays a key role in meiotic progression. Regulates 3 different functions during meiosis: ensures that sufficient numbers of processed DNA double-strand breaks (DSBs) are available for successful homology search by increasing the steady-state numbers of single-stranded DSB ends. Promotes synaptonemal-complex formation independently of its role in homology search. Plays a key role in the male mid-pachytene checkpoint and the female meiotic prophase checkpoint: required for efficient build-up of ATR activity on unsynapsed chromosome regions, a process believed to form the basis of meiotic silencing of unsynapsed chromatin (MSUC) and meiotic prophase quality control in both sexes. The chain is HORMA domain-containing protein 1 (Hormad1) from Rattus norvegicus (Rat).